The primary structure comprises 725 residues: Putative coiled-coil domain-containing protein 144B (725 aa).

A compositionally biased stretch (basic and acidic residues) spans 1–11 (MASWGGEKRGG). Disordered stretches follow at residues 1–25 (MASWGGEKRGGAEGSPKLAVYATRK), 87–188 (AARS…NLTE), 213–260 (LPEN…DCDR), 453–485 (NMNQNSDSGSTNNYKSLKPKLENLSSLPPDSDR), and 528–586 (EEEM…KVKN). 2 stretches are compositionally biased toward polar residues: residues 129 to 150 (PESLPQNNNPDWHPTNLTLSDE) and 165 to 178 (PSVSPSMPENQSAT). Residues 215–244 (ENKESKEAEQDLELTSEEEQERLKGCENKQ) are a coiled coil. Residues 224–234 (QDLELTSEEEQ) are compositionally biased toward acidic residues. The segment covering 453 to 467 (NMNQNSDSGSTNNYK) has biased composition (polar residues). The stretch at 490–546 (YLHEELQQDMQKFKNEVNTLEEEFLALKKENVQLHKEVEEEMEKHRSNSTELSGTLT) forms a coiled coil. Basic and acidic residues predominate over residues 528-537 (EEEMEKHRSN). Residues 543–552 (GTLTDGTTVG) show a composition bias toward low complexity. The span at 563–583 (PRKENEEHDRPADKTANEKNK) shows a compositional bias: basic and acidic residues. A coiled-coil region spans residues 648 to 713 (LLKLKNNHCD…ALKQENGRKE (66 aa)).

Belongs to the CCDC144 family.

The chain is Putative coiled-coil domain-containing protein 144B from Homo sapiens (Human).